Reading from the N-terminus, the 231-residue chain is N-acetylmuramate alpha-1-phosphate uridylyltransferase (231 aa).

UTP contacts are provided by residues 11–13 (GER) and Lys23. Position 106 (Asn106) interacts with substrate. Asp108 provides a ligand contact to Mg(2+). Asp146 and Asp213 together coordinate substrate. Asp213 serves as a coordination point for Mg(2+).

It belongs to the nucleotidyltransferase MurU family. In terms of assembly, monomer. Mg(2+) is required as a cofactor.

The enzyme catalyses N-acetyl-alpha-D-muramate 1-phosphate + UDP + H(+) = UDP-N-acetyl-alpha-D-muramate + phosphate. The protein operates within cell wall biogenesis; peptidoglycan recycling. Its function is as follows. Catalyzes the formation of UDP-N-acetylmuramate (UDP-MurNAc), a crucial precursor of the bacterial peptidoglycan cell wall, from UTP and MurNAc-alpha-1P. Is likely involved in peptidoglycan recycling as part of a cell wall recycling pathway that bypasses de novo biosynthesis of the peptidoglycan precursor UDP-MurNAc. Is able to complement the fosfomycin sensitivity phenotype of a P.putida mutant lacking murU. The sequence is that of N-acetylmuramate alpha-1-phosphate uridylyltransferase from Neisseria meningitidis serogroup B (strain ATCC BAA-335 / MC58).